We begin with the raw amino-acid sequence, 131 residues long: Small ribosomal subunit protein uS8 (131 aa).

The protein belongs to the universal ribosomal protein uS8 family. Part of the 30S ribosomal subunit. Contacts proteins S5 and S12.

One of the primary rRNA binding proteins, it binds directly to 16S rRNA central domain where it helps coordinate assembly of the platform of the 30S subunit. In Chlorobium phaeovibrioides (strain DSM 265 / 1930) (Prosthecochloris vibrioformis (strain DSM 265)), this protein is Small ribosomal subunit protein uS8.